The chain runs to 384 residues: MVIIDSLSFYRPFWICMRLLVPTFFKDSSRPVQLYVVLLHILVTLWFPLHLLLHLLLLPSTAEFFKNLTMSLTCVACSLKHVAHLYHLPQIVEIESLIEQLDTFIASEQEHRYYRDHVHCHARRFTRCLYISFGMIYALFLFGVFVQVISGNWELLYPAYFPFDLESNRFLGAVALGYQVFSMLVEGFQGLGNDTYTPLTLCLLAGHVHLWSIRMGQLGYFDDETVVNHQRLLDYIEQHKLLVRFHNLVSRTISEVQLVQLGGCGATLCIIVSYMLFFVGDTISLVYYLVFFGVVCVQLFPSCYFASEVAEELERLPYAIFSSRWYDQSRDHRFDLLIFTQLTLGNRGWIIKAGGLIELNLNAFFATLKMAYSLFAVVVRAKGI.

Residues 1 to 35 (MVIIDSLSFYRPFWICMRLLVPTFFKDSSRPVQLY) lie on the Cytoplasmic side of the membrane. A helical membrane pass occupies residues 36–56 (VVLLHILVTLWFPLHLLLHLL). Over 57–63 (LLPSTAE) the chain is Extracellular. A helical membrane pass occupies residues 64 to 84 (FFKNLTMSLTCVACSLKHVAH). Over 85-128 (LYHLPQIVEIESLIEQLDTFIASEQEHRYYRDHVHCHARRFTRC) the chain is Cytoplasmic. Residues 129–149 (LYISFGMIYALFLFGVFVQVI) form a helical membrane-spanning segment. Over 150-169 (SGNWELLYPAYFPFDLESNR) the chain is Extracellular. A helical transmembrane segment spans residues 170-190 (FLGAVALGYQVFSMLVEGFQG). At 191 to 251 (LGNDTYTPLT…LVRFHNLVSR (61 aa)) the chain is on the cytoplasmic side. A helical transmembrane segment spans residues 252 to 272 (TISEVQLVQLGGCGATLCIIV). Residues 273–274 (SY) lie on the Extracellular side of the membrane. A helical membrane pass occupies residues 275-295 (MLFFVGDTISLVYYLVFFGVV). Residues 296-358 (CVQLFPSCYF…WIIKAGGLIE (63 aa)) are Cytoplasmic-facing. A helical membrane pass occupies residues 359–379 (LNLNAFFATLKMAYSLFAVVV). The Extracellular portion of the chain corresponds to 380–384 (RAKGI).

This sequence belongs to the insect chemoreceptor superfamily. Heteromeric odorant receptor channel (TC 1.A.69) family. Or2a subfamily. Interacts with Orco. Complexes exist early in the endomembrane system in olfactory sensory neurons (OSNs), coupling these complexes to the conserved ciliary trafficking pathway. Expressed in the antenna and in a subset of 18 olfactory receptor neurons in the maxillary palp.

The protein resides in the cell membrane. In terms of biological role, odorant receptor which mediates acceptance or avoidance behavior, depending on its substrates. The odorant receptor repertoire encodes a large collection of odor stimuli that vary widely in identity, intensity, and duration. May form a complex with Orco to form odorant-sensing units, providing sensitive and prolonged odorant signaling and calcium permeability. The sequence is that of Odorant receptor 33c (Or33c) from Drosophila melanogaster (Fruit fly).